A 223-amino-acid polypeptide reads, in one-letter code: Phosphoribosylformylglycinamidine synthase subunit PurQ (223 aa).

In terms of domain architecture, Glutamine amidotransferase type-1 spans 3 to 223 (FAVLVFPGSN…MVNSWREQNV (221 aa)). Cysteine 85 serves as the catalytic Nucleophile. Residues histidine 193 and glutamate 195 contribute to the active site.

Part of the FGAM synthase complex composed of 1 PurL, 1 PurQ and 2 PurS subunits.

The protein localises to the cytoplasm. The catalysed reaction is N(2)-formyl-N(1)-(5-phospho-beta-D-ribosyl)glycinamide + L-glutamine + ATP + H2O = 2-formamido-N(1)-(5-O-phospho-beta-D-ribosyl)acetamidine + L-glutamate + ADP + phosphate + H(+). It catalyses the reaction L-glutamine + H2O = L-glutamate + NH4(+). It functions in the pathway purine metabolism; IMP biosynthesis via de novo pathway; 5-amino-1-(5-phospho-D-ribosyl)imidazole from N(2)-formyl-N(1)-(5-phospho-D-ribosyl)glycinamide: step 1/2. In terms of biological role, part of the phosphoribosylformylglycinamidine synthase complex involved in the purines biosynthetic pathway. Catalyzes the ATP-dependent conversion of formylglycinamide ribonucleotide (FGAR) and glutamine to yield formylglycinamidine ribonucleotide (FGAM) and glutamate. The FGAM synthase complex is composed of three subunits. PurQ produces an ammonia molecule by converting glutamine to glutamate. PurL transfers the ammonia molecule to FGAR to form FGAM in an ATP-dependent manner. PurS interacts with PurQ and PurL and is thought to assist in the transfer of the ammonia molecule from PurQ to PurL. This chain is Phosphoribosylformylglycinamidine synthase subunit PurQ, found in Staphylococcus haemolyticus (strain JCSC1435).